Consider the following 194-residue polypeptide: FMN-dependent NADH:quinone oxidoreductase (194 aa).

FMN-binding positions include Ser9, 15–17, and 85–88; these read SIS and MYNF.

The protein belongs to the azoreductase type 1 family. In terms of assembly, homodimer. Requires FMN as cofactor.

The enzyme catalyses 2 a quinone + NADH + H(+) = 2 a 1,4-benzosemiquinone + NAD(+). The catalysed reaction is N,N-dimethyl-1,4-phenylenediamine + anthranilate + 2 NAD(+) = 2-(4-dimethylaminophenyl)diazenylbenzoate + 2 NADH + 2 H(+). Functionally, quinone reductase that provides resistance to thiol-specific stress caused by electrophilic quinones. Its function is as follows. Also exhibits azoreductase activity. Catalyzes the reductive cleavage of the azo bond in aromatic azo compounds to the corresponding amines. This Xanthomonas oryzae pv. oryzae (strain MAFF 311018) protein is FMN-dependent NADH:quinone oxidoreductase.